Reading from the N-terminus, the 172-residue chain is RNA pyrophosphohydrolase (172 aa).

The Nudix hydrolase domain occupies Gly6 to Lys149. Residues Gly38 to Gly59 carry the Nudix box motif.

Belongs to the Nudix hydrolase family. RppH subfamily. A divalent metal cation is required as a cofactor.

In terms of biological role, accelerates the degradation of transcripts by removing pyrophosphate from the 5'-end of triphosphorylated RNA, leading to a more labile monophosphorylated state that can stimulate subsequent ribonuclease cleavage. In Shewanella denitrificans (strain OS217 / ATCC BAA-1090 / DSM 15013), this protein is RNA pyrophosphohydrolase.